The chain runs to 359 residues: Guanine nucleotide-binding protein alpha-4 subunit (359 aa).

The N-myristoyl glycine moiety is linked to residue glycine 2. Residue cysteine 3 is the site of S-palmitoyl cysteine attachment. A G-alpha domain is found at 31–359 (GEIKLLLLGA…RNNLYLCGLY (329 aa)). The tract at residues 34–47 (KLLLLGAGESGKST) is G1 motif. GTP-binding positions include 39-46 (GAGESGKS), 178-184 (LRARVKS), 203-207 (DVGGQ), 272-275 (NKMD), and alanine 331. Serine 46 contributes to the Mg(2+) binding site. The segment at 176–184 (DILRARVKS) is G2 motif. A G3 motif region spans residues 199-208 (FKMFDVGGQR). The segment at 268–275 (ILFLNKMD) is G4 motif. The segment at 329-334 (TCATDT) is G5 motif.

It belongs to the G-alpha family. G(i/o/t/z) subfamily. As to quaternary structure, g proteins are composed of 3 units; alpha, beta and gamma. The alpha chain contains the guanine nucleotide binding site. Expressed in ASI neurons.

Its function is as follows. Guanine nucleotide-binding proteins (G proteins) are involved as modulators or transducers in various transmembrane signaling systems. Acts in concert with npr-15 to activate TGF-beta-like daf-7 secretion in the ASI neuron, thereby promoting larval development and inhibition of dauer diapause. The polypeptide is Guanine nucleotide-binding protein alpha-4 subunit (gpa-4) (Caenorhabditis elegans).